We begin with the raw amino-acid sequence, 151 residues long: Multiprotein-bridging factor 1 (151 aa).

The segment at 1-31 is disordered; it reads MSDWESHTVIGQKARAGGSGPRANVARTQGQ. The region spanning 85–139 is the HTH cro/C1-type domain; it reads IARVRTEKKMSQKDLATKINEKPTVINDYEAGRAIPNQQVLGKMERALGVKLRGK. A DNA-binding region (H-T-H motif) is located at residues 96 to 115; it reads QKDLATKINEKPTVINDYEA.

Belongs to the MBF1 family.

Its function is as follows. Transcriptional coactivator that stimulates GCN4-dependent transcriptional activity by bridging the DNA-binding region of GCN4 and TBP (SPT15), thereby recruiting TBP to GCN4-bound promoters. Involved in induction of the ribosome quality control (RQC) pathway; a pathway that degrades nascent peptide chains during problematic translation. Required to prevent stalled ribosomes from frameshifting. This Candida glabrata (strain ATCC 2001 / BCRC 20586 / JCM 3761 / NBRC 0622 / NRRL Y-65 / CBS 138) (Yeast) protein is Multiprotein-bridging factor 1 (MBF1).